A 427-amino-acid polypeptide reads, in one-letter code: Enolase (427 aa).

Gln-163 is a binding site for (2R)-2-phosphoglycerate. Catalysis depends on Glu-205, which acts as the Proton donor. Positions 242, 283, and 310 each coordinate Mg(2+). 4 residues coordinate (2R)-2-phosphoglycerate: Lys-335, Arg-364, Ser-365, and Lys-386. The active-site Proton acceptor is Lys-335.

Belongs to the enolase family. Requires Mg(2+) as cofactor.

The protein localises to the cytoplasm. It localises to the secreted. The protein resides in the cell surface. The enzyme catalyses (2R)-2-phosphoglycerate = phosphoenolpyruvate + H2O. It participates in carbohydrate degradation; glycolysis; pyruvate from D-glyceraldehyde 3-phosphate: step 4/5. In terms of biological role, catalyzes the reversible conversion of 2-phosphoglycerate (2-PG) into phosphoenolpyruvate (PEP). It is essential for the degradation of carbohydrates via glycolysis. In Salinispora tropica (strain ATCC BAA-916 / DSM 44818 / JCM 13857 / NBRC 105044 / CNB-440), this protein is Enolase.